The sequence spans 257 residues: Imidazole glycerol phosphate synthase subunit HisF (257 aa).

Active-site residues include Asp12 and Asp131.

It belongs to the HisA/HisF family. As to quaternary structure, heterodimer of HisH and HisF.

Its subcellular location is the cytoplasm. The enzyme catalyses 5-[(5-phospho-1-deoxy-D-ribulos-1-ylimino)methylamino]-1-(5-phospho-beta-D-ribosyl)imidazole-4-carboxamide + L-glutamine = D-erythro-1-(imidazol-4-yl)glycerol 3-phosphate + 5-amino-1-(5-phospho-beta-D-ribosyl)imidazole-4-carboxamide + L-glutamate + H(+). The protein operates within amino-acid biosynthesis; L-histidine biosynthesis; L-histidine from 5-phospho-alpha-D-ribose 1-diphosphate: step 5/9. IGPS catalyzes the conversion of PRFAR and glutamine to IGP, AICAR and glutamate. The HisF subunit catalyzes the cyclization activity that produces IGP and AICAR from PRFAR using the ammonia provided by the HisH subunit. The chain is Imidazole glycerol phosphate synthase subunit HisF from Burkholderia mallei (strain NCTC 10247).